A 316-amino-acid chain; its full sequence is ATP synthase gamma chain (316 aa).

Belongs to the ATPase gamma chain family. F-type ATPases have 2 components, CF(1) - the catalytic core - and CF(0) - the membrane proton channel. CF(1) has five subunits: alpha(3), beta(3), gamma(1), delta(1), epsilon(1). CF(0) has three main subunits: a, b and c.

The protein resides in the cellular thylakoid membrane. Functionally, produces ATP from ADP in the presence of a proton gradient across the membrane. The gamma chain is believed to be important in regulating ATPase activity and the flow of protons through the CF(0) complex. The protein is ATP synthase gamma chain of Prochlorococcus marinus (strain SARG / CCMP1375 / SS120).